We begin with the raw amino-acid sequence, 235 residues long: 2-C-methyl-D-erythritol 4-phosphate cytidylyltransferase (235 aa).

Belongs to the IspD/TarI cytidylyltransferase family. IspD subfamily. Homodimer.

The catalysed reaction is 2-C-methyl-D-erythritol 4-phosphate + CTP + H(+) = 4-CDP-2-C-methyl-D-erythritol + diphosphate. The protein operates within isoprenoid biosynthesis; isopentenyl diphosphate biosynthesis via DXP pathway; isopentenyl diphosphate from 1-deoxy-D-xylulose 5-phosphate: step 2/6. Catalyzes the formation of 4-diphosphocytidyl-2-C-methyl-D-erythritol from CTP and 2-C-methyl-D-erythritol 4-phosphate (MEP). The protein is 2-C-methyl-D-erythritol 4-phosphate cytidylyltransferase of Serratia proteamaculans (strain 568).